The chain runs to 511 residues: Lysine--tRNA ligase (511 aa).

Residues Glu-421 and Glu-428 each contribute to the Mg(2+) site.

The protein belongs to the class-II aminoacyl-tRNA synthetase family. As to quaternary structure, homodimer. It depends on Mg(2+) as a cofactor.

It localises to the cytoplasm. It carries out the reaction tRNA(Lys) + L-lysine + ATP = L-lysyl-tRNA(Lys) + AMP + diphosphate. This chain is Lysine--tRNA ligase, found in Aeromonas hydrophila subsp. hydrophila (strain ATCC 7966 / DSM 30187 / BCRC 13018 / CCUG 14551 / JCM 1027 / KCTC 2358 / NCIMB 9240 / NCTC 8049).